Here is a 66-residue protein sequence, read N- to C-terminus: Large ribosomal subunit protein bL33c (66 aa).

This sequence belongs to the bacterial ribosomal protein bL33 family.

It localises to the plastid. Its subcellular location is the chloroplast. The protein is Large ribosomal subunit protein bL33c of Physcomitrium patens (Spreading-leaved earth moss).